The following is a 302-amino-acid chain: Sulfate adenylyltransferase subunit 2 (302 aa).

Positions 280 to 302 (RQGRAIDHDQSGSMELKKRQGYF) are disordered.

This sequence belongs to the PAPS reductase family. CysD subfamily. As to quaternary structure, heterodimer composed of CysD, the smaller subunit, and CysN.

The catalysed reaction is sulfate + ATP + H(+) = adenosine 5'-phosphosulfate + diphosphate. It functions in the pathway sulfur metabolism; hydrogen sulfide biosynthesis; sulfite from sulfate: step 1/3. With CysN forms the ATP sulfurylase (ATPS) that catalyzes the adenylation of sulfate producing adenosine 5'-phosphosulfate (APS) and diphosphate, the first enzymatic step in sulfur assimilation pathway. APS synthesis involves the formation of a high-energy phosphoric-sulfuric acid anhydride bond driven by GTP hydrolysis by CysN coupled to ATP hydrolysis by CysD. The polypeptide is Sulfate adenylyltransferase subunit 2 (Vibrio vulnificus (strain CMCP6)).